The following is a 389-amino-acid chain: Lipid-A-disaccharide synthase (389 aa).

Belongs to the LpxB family.

It carries out the reaction a lipid X + a UDP-2-N,3-O-bis[(3R)-3-hydroxyacyl]-alpha-D-glucosamine = a lipid A disaccharide + UDP + H(+). It participates in bacterial outer membrane biogenesis; LPS lipid A biosynthesis. Its function is as follows. Condensation of UDP-2,3-diacylglucosamine and 2,3-diacylglucosamine-1-phosphate to form lipid A disaccharide, a precursor of lipid A, a phosphorylated glycolipid that anchors the lipopolysaccharide to the outer membrane of the cell. In Paraburkholderia phymatum (strain DSM 17167 / CIP 108236 / LMG 21445 / STM815) (Burkholderia phymatum), this protein is Lipid-A-disaccharide synthase.